The sequence spans 57 residues: MAVPFRRTSKTVKRKRRTHFKLSVPGMVECPSCGEAKLAHRVCKACGTYKGKEVISK.

It belongs to the bacterial ribosomal protein bL32 family.

The chain is Large ribosomal subunit protein bL32 from Bacillus anthracis (strain A0248).